Consider the following 192-residue polypeptide: 3-isopropylmalate dehydratase small subunit (192 aa).

Belongs to the LeuD family. LeuD type 1 subfamily. In terms of assembly, heterodimer of LeuC and LeuD.

It carries out the reaction (2R,3S)-3-isopropylmalate = (2S)-2-isopropylmalate. The protein operates within amino-acid biosynthesis; L-leucine biosynthesis; L-leucine from 3-methyl-2-oxobutanoate: step 2/4. Catalyzes the isomerization between 2-isopropylmalate and 3-isopropylmalate, via the formation of 2-isopropylmaleate. The protein is 3-isopropylmalate dehydratase small subunit of Oceanobacillus iheyensis (strain DSM 14371 / CIP 107618 / JCM 11309 / KCTC 3954 / HTE831).